The following is a 273-amino-acid chain: 3-methyl-2-oxobutanoate hydroxymethyltransferase (273 aa).

Mg(2+) is bound by residues Asp-53 and Asp-92. 3-methyl-2-oxobutanoate contacts are provided by residues 53–54 (DS), Asp-92, and Lys-122. Glu-124 is a binding site for Mg(2+). Glu-191 (proton acceptor) is an active-site residue.

It belongs to the PanB family. Homodecamer; pentamer of dimers. Mg(2+) is required as a cofactor.

The protein localises to the cytoplasm. The catalysed reaction is 3-methyl-2-oxobutanoate + (6R)-5,10-methylene-5,6,7,8-tetrahydrofolate + H2O = 2-dehydropantoate + (6S)-5,6,7,8-tetrahydrofolate. The protein operates within cofactor biosynthesis; (R)-pantothenate biosynthesis; (R)-pantoate from 3-methyl-2-oxobutanoate: step 1/2. Functionally, catalyzes the reversible reaction in which hydroxymethyl group from 5,10-methylenetetrahydrofolate is transferred onto alpha-ketoisovalerate to form ketopantoate. This is 3-methyl-2-oxobutanoate hydroxymethyltransferase from Phocaeicola vulgatus (strain ATCC 8482 / DSM 1447 / JCM 5826 / CCUG 4940 / NBRC 14291 / NCTC 11154) (Bacteroides vulgatus).